We begin with the raw amino-acid sequence, 154 residues long: MGLSDQEWQQVLSIWGKVESDLAGHGHQVLMRLFQDHPETLDRFDKFKGLKTPDQMKGSEDLKKHGVTVLTQLGKILKQKGNHESELKPLAQTHATKHKIPVKYLEFISEAIMKVIAEKHAADFGGDSQAAMKKALELFRNDMASKYKEFGFQG.

In terms of domain architecture, Globin spans 2–148 (GLSDQEWQQV…FRNDMASKYK (147 aa)). His-65 provides a ligand contact to nitrite. His-65 lines the O2 pocket. His-94 is a heme b binding site.

The protein belongs to the globin family. In terms of assembly, monomeric.

It is found in the cytoplasm. It localises to the sarcoplasm. It carries out the reaction Fe(III)-heme b-[protein] + nitric oxide + H2O = Fe(II)-heme b-[protein] + nitrite + 2 H(+). It catalyses the reaction H2O2 + AH2 = A + 2 H2O. Its function is as follows. Monomeric heme protein which primary function is to store oxygen and facilitate its diffusion within muscle tissues. Reversibly binds oxygen through a pentacoordinated heme iron and enables its timely and efficient release as needed during periods of heightened demand. Depending on the oxidative conditions of tissues and cells, and in addition to its ability to bind oxygen, it also has a nitrite reductase activity whereby it regulates the production of bioactive nitric oxide. Under stress conditions, like hypoxia and anoxia, it also protects cells against reactive oxygen species thanks to its pseudoperoxidase activity. This Aethia pygmaea (Whiskered auklet) protein is Myoglobin (MB).